We begin with the raw amino-acid sequence, 367 residues long: Protein-glutamate methylesterase/protein-glutamine glutaminase 2 (367 aa).

The Response regulatory domain maps to 3–120 (SVVVVDDSAF…SLDIVRIEND (118 aa)). D54 bears the 4-aspartylphosphate mark. The interval 132 to 174 (RMLRTPRPVRPAPTASAPAQTAQVASAAPATAPSRPAMPATRA) is disordered. Residues 143–174 (APTASAPAQTAQVASAAPATAPSRPAMPATRA) are compositionally biased toward low complexity. The CheB-type methylesterase domain occupies 175–367 (SRPVRDVVAI…AAAIMNGLYK (193 aa)). Residues S187, H214, and D310 contribute to the active site.

It belongs to the CheB family. Phosphorylated by CheA. Phosphorylation of the N-terminal regulatory domain activates the methylesterase activity.

It localises to the cytoplasm. It catalyses the reaction [protein]-L-glutamate 5-O-methyl ester + H2O = L-glutamyl-[protein] + methanol + H(+). It carries out the reaction L-glutaminyl-[protein] + H2O = L-glutamyl-[protein] + NH4(+). In terms of biological role, involved in chemotaxis. Part of a chemotaxis signal transduction system that modulates chemotaxis in response to various stimuli. Catalyzes the demethylation of specific methylglutamate residues introduced into the chemoreceptors (methyl-accepting chemotaxis proteins or MCP) by CheR. Also mediates the irreversible deamidation of specific glutamine residues to glutamic acid. In Nitratidesulfovibrio vulgaris (strain ATCC 29579 / DSM 644 / CCUG 34227 / NCIMB 8303 / VKM B-1760 / Hildenborough) (Desulfovibrio vulgaris), this protein is Protein-glutamate methylesterase/protein-glutamine glutaminase 2.